A 359-amino-acid chain; its full sequence is Probable deacetylase AF_0130 (359 aa).

Residue His-126 is the Proton donor/acceptor of the active site. Asp-162, His-164, and Asp-249 together coordinate Zn(2+).

This sequence belongs to the histone deacetylase family. Zn(2+) serves as cofactor.

Probable deacetylase. This is Probable deacetylase AF_0130 from Archaeoglobus fulgidus (strain ATCC 49558 / DSM 4304 / JCM 9628 / NBRC 100126 / VC-16).